A 199-amino-acid polypeptide reads, in one-letter code: Peptidyl-tRNA hydrolase (199 aa).

Tyr-15 is a binding site for tRNA. The active-site Proton acceptor is His-20. Residues Phe-66, Asn-68, and Asn-114 each contribute to the tRNA site.

The protein belongs to the PTH family. As to quaternary structure, monomer.

The protein resides in the cytoplasm. The enzyme catalyses an N-acyl-L-alpha-aminoacyl-tRNA + H2O = an N-acyl-L-amino acid + a tRNA + H(+). Hydrolyzes ribosome-free peptidyl-tRNAs (with 1 or more amino acids incorporated), which drop off the ribosome during protein synthesis, or as a result of ribosome stalling. In terms of biological role, catalyzes the release of premature peptidyl moieties from peptidyl-tRNA molecules trapped in stalled 50S ribosomal subunits, and thus maintains levels of free tRNAs and 50S ribosomes. In Cupriavidus pinatubonensis (strain JMP 134 / LMG 1197) (Cupriavidus necator (strain JMP 134)), this protein is Peptidyl-tRNA hydrolase.